Reading from the N-terminus, the 206-residue chain is Urease accessory protein UreE (206 aa).

The segment at 136–206 (PEGGAYAEPS…HGHAHAHDRK (71 aa)) is disordered. 2 stretches are compositionally biased toward basic and acidic residues: residues 148–169 (QGHDEHDHHHGHDHHHDHGGHE) and 177–191 (HGHAHDDHVHDEHCG). Residues 192–206 (HGHHHHGHAHAHDRK) are compositionally biased toward basic residues.

Belongs to the UreE family.

The protein resides in the cytoplasm. Involved in urease metallocenter assembly. Binds nickel. Probably functions as a nickel donor during metallocenter assembly. The sequence is that of Urease accessory protein UreE from Bradyrhizobium sp. (strain BTAi1 / ATCC BAA-1182).